Reading from the N-terminus, the 227-residue chain is Germin-like protein subfamily T member 3 (227 aa).

An N-terminal signal peptide occupies residues 1–26 (MAHISQISSFLSIVLIFLALCITLFT). Cysteines 44 and 59 form a disulfide. Positions 71–219 (SGLNTPLNTS…AFKADSKTIN (149 aa)) constitute a Cupin type-1 domain. N-linked (GlcNAc...) asparagine glycosylation is present at asparagine 78. Mn(2+) contacts are provided by histidine 119, histidine 121, and glutamate 126. N-linked (GlcNAc...) asparagine glycosylation is present at asparagine 143. Histidine 165 serves as a coordination point for Mn(2+).

It belongs to the germin family. In terms of assembly, oligomer (believed to be a pentamer but probably hexamer).

It is found in the secreted. Its subcellular location is the extracellular space. The protein resides in the apoplast. May play a role in plant defense. Probably has no oxalate oxidase activity even if the active site is conserved. The sequence is that of Germin-like protein subfamily T member 3 from Arabidopsis thaliana (Mouse-ear cress).